We begin with the raw amino-acid sequence, 1172 residues long: Phytochrome B (1172 aa).

Positions 1–16 (MVSGVGGSGGGRGGGR) are enriched in gly residues. A disordered region spans residues 1 to 54 (MVSGVGGSGGGRGGGRGGEEEPSSSHTPNNRRGGEQAQSSGTKSLRPRSNTESM). Positions 24-54 (SSHTPNNRRGGEQAQSSGTKSLRPRSNTESM) are enriched in polar residues. A GAF domain is found at 252-433 (DIKLLCDTVV…AFGLQLNMEL (182 aa)). Cys357 contributes to the phytochromobilin binding site. 2 PAS domains span residues 652-723 (VARE…LRGD) and 786-857 (DYKA…MIVL). The Histidine kinase domain maps to 934–1153 (YICQVIKNPL…LIILELPVPR (220 aa)).

Belongs to the phytochrome family. In terms of assembly, homodimer. Interacts with ADO1 and PKS4. Stabilized by interactions with PAPP5 and FYPP3 which are enhanced in the phosphorylated Pfr form. Interacts with VOZ1 and VOZ2. Binds, via its photosensory domain, to PTAC12/HMR/PAP5 when photoactivated; this interaction stimulates its localization to photobodies. Interacts with CRY1 specifically when in the dark/far-red (Pr) state, but not when red light-activated (Pfr). Interacts with PIF4 and PIF5 in response to low blue light (LBL). Component of a red light-dependent nuclear complex made of PHL, PHYB and CO. Interacts directly with PHL. Binds to UNE10/PIF8 when red light-activated (Pfr). When light-activated, interacts with PCH1 and PCHL. Associated with DRT111/RSN2/SFPS, SMP2 and SWAP1 in nuclear photobodies upon response to red light (Pfr form). Contains one covalently linked phytochromobilin chromophore. Expressed in fruits, flowers, leaves, stems, seedlings and roots.

The protein resides in the cytoplasm. The protein localises to the nucleus. It is found in the nucleoplasm. Its subcellular location is the nucleus speckle. Functionally, regulatory photoreceptor which exists in two forms that are reversibly interconvertible by light: the Pr form that absorbs maximally in the red region of the spectrum and the Pfr form that absorbs maximally in the far-red region. Photoconversion of Pr to Pfr induces an array of morphogenetic responses, whereas reconversion of Pfr to Pr cancels the induction of those responses. Pfr controls the expression of a number of nuclear genes including those encoding the small subunit of ribulose-bisphosphate carboxylase, chlorophyll A/B binding protein, protochlorophyllide reductase, rRNA, etc. It also controls the expression of its own gene(s) in a negative feedback fashion. Involved in the flowering time regulation. Involved in light-regulated circadian phase control that triggers stomatal aperture, stomatal conductance, and CO(2) assimilation. Implicated in red light perception, and, to a lower extent, in blue light signaling. Controls thermomorphogenesis in the daytime and regulates temperature responses by associating with the promoters of key target genes in a temperature-dependent manner and subsequently repressing their expression in a PIF4-dependent manner (temperature-responsive transcriptional regulator); this process requires PTAC12/HMR/PAP5 (transcriptional activator). Thermal timer that integrates temperature information over the course of the night. Detabilizes UNE10/PIF8 in red light. In Arabidopsis thaliana (Mouse-ear cress), this protein is Phytochrome B.